The following is a 137-amino-acid chain: Putative pre-16S rRNA nuclease (137 aa).

The protein belongs to the YqgF nuclease family.

It localises to the cytoplasm. Could be a nuclease involved in processing of the 5'-end of pre-16S rRNA. The polypeptide is Putative pre-16S rRNA nuclease (Bacillus cereus (strain B4264)).